Consider the following 338-residue polypeptide: Malate dehydrogenase, mitochondrial (338 aa).

The N-terminal 24 residues, methionine 1–asparagine 24, are a transit peptide targeting the mitochondrion. NAD(+) is bound by residues glycine 31–glycine 37 and aspartate 57. Serine 33 carries O-linked (GlcNAc) serine glycosylation. Residues lysine 78 and lysine 91 each carry the N6-acetyllysine; alternate modification. N6-succinyllysine; alternate is present on residues lysine 78 and lysine 91. Residues arginine 104 and arginine 110 each contribute to the substrate site. NAD(+) is bound by residues asparagine 117 and isoleucine 140–asparagine 142. Substrate is bound at residue asparagine 142. At lysine 165 the chain carries N6-acetyllysine. Arginine 176 serves as a coordination point for substrate. The residue at position 185 (lysine 185) is an N6-acetyllysine; alternate. Lysine 185 bears the N6-succinyllysine; alternate mark. The active-site Proton acceptor is histidine 200. Lysine 203 is subject to N6-succinyllysine. N6-acetyllysine; alternate is present on residues lysine 215 and lysine 239. Lysine 215 and lysine 239 each carry N6-succinyllysine; alternate. Lysine 239 is subject to N6-malonyllysine; alternate. At serine 246 the chain carries Phosphoserine. Methionine 251 serves as a coordination point for NAD(+). Lysine 269 is subject to N6-succinyllysine. Residues lysine 296, lysine 301, lysine 307, lysine 314, and lysine 324 each carry the N6-acetyllysine; alternate modification. 5 positions are modified to N6-succinyllysine; alternate: lysine 296, lysine 301, lysine 307, lysine 314, and lysine 324. Residue lysine 307 is modified to N6-malonyllysine; alternate. Serine 326 carries the post-translational modification Phosphoserine. Lysine 328, lysine 329, and lysine 335 each carry N6-acetyllysine; alternate. Lysine 328 is modified (N6-succinyllysine; alternate). Lysine 329 carries the post-translational modification N6-malonyllysine; alternate. Position 335 is an N6-succinyllysine; alternate (lysine 335).

It belongs to the LDH/MDH superfamily. MDH type 1 family. Homodimer. Acetylation is enhanced by up to 67% after treatment either with trichostin A (TSA) or with nicotinamide (NAM) with the appearance of tri- and tetraacetylations. Glucose also increases acetylation by about 60%.

Its subcellular location is the mitochondrion matrix. The catalysed reaction is (S)-malate + NAD(+) = oxaloacetate + NADH + H(+). Its activity is regulated as follows. Enzyme activity is enhanced by acetylation. The chain is Malate dehydrogenase, mitochondrial (MDH2) from Homo sapiens (Human).